We begin with the raw amino-acid sequence, 252 residues long: Major prion protein (252 aa).

The first 22 residues, 1 to 22 (MANLGYWMLVLFVATWSDLGLC), serve as a signal peptide directing secretion. The tract at residues 23–229 (KKRPKPGGWN…ESQAYYQRGS (207 aa)) is interaction with GRB2, ERI3 and SYN1. Positions 26-104 (PKPGGWNTGG…HNQWNKPSKP (79 aa)) are disordered. Tandem repeats lie at residues 51 to 58 (PQGGGWGQ), 59 to 66 (PHGGGWGQ), 67 to 74 (PHGGGWGQ), 75 to 82 (PHGGGWGQ), and 83 to 90 (PHGGGWGQ). The interval 51–90 (PQGGGWGQPHGGGWGQPHGGGWGQPHGGGWGQPHGGGWGQ) is 5 X 8 AA tandem repeats of P-H-G-G-G-W-G-Q. Residues 52–92 (QGGGWGQPHGGGWGQPHGGGWGQPHGGGWGQPHGGGWGQAG) show a composition bias toward gly residues. Positions 60, 61, 62, 68, 69, 70, 76, 77, 78, 84, 85, and 86 each coordinate Cu(2+). A disulfide bridge links C178 with C213. N180 and N196 each carry an N-linked (GlcNAc...) asparagine glycan. S229 carries GPI-anchor amidated serine lipidation. Positions 230-252 (SMVLFSSPPVILLISFLIFLIVG) are cleaved as a propeptide — removed in mature form.

This sequence belongs to the prion family. As to quaternary structure, monomer and homodimer. Has a tendency to aggregate into amyloid fibrils containing a cross-beta spine, formed by a steric zipper of superposed beta-strands. Soluble oligomers may represent an intermediate stage on the path to fibril formation. Copper binding may promote oligomerization. Interacts with GRB2, APP, ERI3/PRNPIP and SYN1. Mislocalized cytosolically exposed PrP interacts with MGRN1; this interaction alters MGRN1 subcellular location and causes lysosomal enlargement. Interacts with KIAA1191.

The protein localises to the cell membrane. It is found in the golgi apparatus. In terms of biological role, its primary physiological function is unclear. Has cytoprotective activity against internal or environmental stresses. May play a role in neuronal development and synaptic plasticity. May be required for neuronal myelin sheath maintenance. May play a role in iron uptake and iron homeostasis. Soluble oligomers are toxic to cultured neuroblastoma cells and induce apoptosis (in vitro). Association with GPC1 (via its heparan sulfate chains) targets PRNP to lipid rafts. Also provides Cu(2+) or Zn(2+) for the ascorbate-mediated GPC1 deaminase degradation of its heparan sulfate side chains. In Ateles paniscus (Black spider monkey), this protein is Major prion protein (PRNP).